The primary structure comprises 115 residues: NAD(P)H-quinone oxidoreductase subunit M (115 aa).

Belongs to the complex I NdhM subunit family. NDH-1 can be composed of about 15 different subunits; different subcomplexes with different compositions have been identified which probably have different functions.

It localises to the cellular thylakoid membrane. It carries out the reaction a plastoquinone + NADH + (n+1) H(+)(in) = a plastoquinol + NAD(+) + n H(+)(out). The catalysed reaction is a plastoquinone + NADPH + (n+1) H(+)(in) = a plastoquinol + NADP(+) + n H(+)(out). Its function is as follows. NDH-1 shuttles electrons from an unknown electron donor, via FMN and iron-sulfur (Fe-S) centers, to quinones in the respiratory and/or the photosynthetic chain. The immediate electron acceptor for the enzyme in this species is believed to be plastoquinone. Couples the redox reaction to proton translocation, and thus conserves the redox energy in a proton gradient. Cyanobacterial NDH-1 also plays a role in inorganic carbon-concentration. In Prochlorococcus marinus (strain MIT 9303), this protein is NAD(P)H-quinone oxidoreductase subunit M.